Consider the following 402-residue polypeptide: Argininosuccinate synthase (402 aa).

9-17 (AYSGGLDTS) is a binding site for ATP. An L-citrulline-binding site is contributed by tyrosine 87. Glycine 117 is an ATP binding site. Threonine 119, asparagine 123, and aspartate 124 together coordinate L-aspartate. Asparagine 123 contacts L-citrulline. Residues arginine 127, serine 176, serine 185, glutamate 261, and tyrosine 273 each contribute to the L-citrulline site.

It belongs to the argininosuccinate synthase family. Type 1 subfamily. Homotetramer.

It is found in the cytoplasm. It carries out the reaction L-citrulline + L-aspartate + ATP = 2-(N(omega)-L-arginino)succinate + AMP + diphosphate + H(+). It functions in the pathway amino-acid biosynthesis; L-arginine biosynthesis; L-arginine from L-ornithine and carbamoyl phosphate: step 2/3. This Chlorobium phaeobacteroides (strain BS1) protein is Argininosuccinate synthase.